Reading from the N-terminus, the 334-residue chain is Dihydroorotate dehydrogenase (quinone) (334 aa).

Residues 59–63 (AGLDK) and T83 each bind FMN. Residue K63 coordinates substrate. 108–112 (NRMGF) lines the substrate pocket. Positions 136 and 169 each coordinate FMN. Position 169 (N169) interacts with substrate. Residue S172 is the Nucleophile of the active site. N174 contributes to the substrate binding site. Residues K214 and T242 each coordinate FMN. Residue 243 to 244 (NT) coordinates substrate. Residues G265, G294, and 315–316 (YS) contribute to the FMN site.

This sequence belongs to the dihydroorotate dehydrogenase family. Type 2 subfamily. As to quaternary structure, monomer. The cofactor is FMN.

The protein localises to the cell membrane. The enzyme catalyses (S)-dihydroorotate + a quinone = orotate + a quinol. It functions in the pathway pyrimidine metabolism; UMP biosynthesis via de novo pathway; orotate from (S)-dihydroorotate (quinone route): step 1/1. Its function is as follows. Catalyzes the conversion of dihydroorotate to orotate with quinone as electron acceptor. The polypeptide is Dihydroorotate dehydrogenase (quinone) (Acinetobacter baylyi (strain ATCC 33305 / BD413 / ADP1)).